Reading from the N-terminus, the 280-residue chain is Protease HtpX (280 aa).

Transmembrane regions (helical) follow at residues 7–26 and 30–49; these read TFIL…GLLG and GMLV…YWYS. Residue His-129 coordinates Zn(2+). Glu-130 is an active-site residue. Position 133 (His-133) interacts with Zn(2+). 2 helical membrane passes run 146-166 and 178-198; these read ATIA…SMFG and VVGM…QMAI. Glu-203 serves as a coordination point for Zn(2+).

It belongs to the peptidase M48B family. It depends on Zn(2+) as a cofactor.

Its subcellular location is the cell inner membrane. The polypeptide is Protease HtpX (Legionella pneumophila (strain Lens)).